Consider the following 331-residue polypeptide: Large ribosomal subunit protein uL3 (331 aa).

It belongs to the universal ribosomal protein uL3 family. In terms of assembly, part of the 50S ribosomal subunit. Forms a cluster with proteins L14 and L24e.

Its function is as follows. One of the primary rRNA binding proteins, it binds directly near the 3'-end of the 23S rRNA, where it nucleates assembly of the 50S subunit. This Thermoplasma volcanium (strain ATCC 51530 / DSM 4299 / JCM 9571 / NBRC 15438 / GSS1) protein is Large ribosomal subunit protein uL3.